The following is a 207-amino-acid chain: Holliday junction branch migration complex subunit RuvA (207 aa).

Positions 1 to 64 (MIGLISGQVQ…EDAQLLYGFI (64 aa)) are domain I. The tract at residues 65–143 (DRKERDVFRQ…NIEVDNSNLE (79 aa)) is domain II. The segment at 144-152 (FAIQPAPIS) is flexible linker. Residues 153–207 (AEDSIIAEVEGALMSLGYKEKEAQQAIKAAKSNGETFADTQSLLKATLQQFQSFK) form a domain III region.

This sequence belongs to the RuvA family. Homotetramer. Forms an RuvA(8)-RuvB(12)-Holliday junction (HJ) complex. HJ DNA is sandwiched between 2 RuvA tetramers; dsDNA enters through RuvA and exits via RuvB. An RuvB hexamer assembles on each DNA strand where it exits the tetramer. Each RuvB hexamer is contacted by two RuvA subunits (via domain III) on 2 adjacent RuvB subunits; this complex drives branch migration. In the full resolvosome a probable DNA-RuvA(4)-RuvB(12)-RuvC(2) complex forms which resolves the HJ.

It localises to the cytoplasm. Functionally, the RuvA-RuvB-RuvC complex processes Holliday junction (HJ) DNA during genetic recombination and DNA repair, while the RuvA-RuvB complex plays an important role in the rescue of blocked DNA replication forks via replication fork reversal (RFR). RuvA specifically binds to HJ cruciform DNA, conferring on it an open structure. The RuvB hexamer acts as an ATP-dependent pump, pulling dsDNA into and through the RuvAB complex. HJ branch migration allows RuvC to scan DNA until it finds its consensus sequence, where it cleaves and resolves the cruciform DNA. In Psychrobacter arcticus (strain DSM 17307 / VKM B-2377 / 273-4), this protein is Holliday junction branch migration complex subunit RuvA.